A 537-amino-acid polypeptide reads, in one-letter code: Pentatricopeptide repeat-containing protein At1g02370, mitochondrial (537 aa).

Residues 1–18 constitute a mitochondrion transit peptide; it reads MNFRNLIASGSRLGKRFC. PPR repeat units follow at residues 171–205, 206–240, 241–275, 277–307, 312–346, 347–377, and 382–416; these read HQSTYGALMNCYCVELEEEKAKAHFEIMDELNFVN, NSLPFNNMMSMYMRLSQPEKVPVLVDAMKQRGISP, CGVTYSIWMQSCGSLNDLDGLEKIIDEMGKDSEAK, TWNTFSNLAAIYTKAGLYEKADSALKSMEEK, NRDSHHFLMSLYAGISKGPEVYRVWESLKKARPEV, NNLSYLVMLQAMSKLGDLDGIKKIFTEWESK, and DMRLANIAINTYLKGNMYEEAEKILDGAMKKSKGP.

The protein belongs to the PPR family. P subfamily.

It localises to the mitochondrion. This is Pentatricopeptide repeat-containing protein At1g02370, mitochondrial from Arabidopsis thaliana (Mouse-ear cress).